An 89-amino-acid chain; its full sequence is MFAIISVTGADHTGIIAAVATKCADLGVNINNVSQTIMDGYFTMILHVSFDDSATDIATIQESMADVEKDQNLVIRIQSQAIFDAMNII.

In terms of domain architecture, ACT spans 4 to 78; the sequence is IISVTGADHT…KDQNLVIRIQ (75 aa).

It belongs to the UPF0237 family.

The protein is UPF0237 protein DIP1286 of Corynebacterium diphtheriae (strain ATCC 700971 / NCTC 13129 / Biotype gravis).